We begin with the raw amino-acid sequence, 704 residues long: RCC1 domain-containing protein DDB_G0295713 (704 aa).

2 RCC1 repeats span residues 1–48 (MYCW…VKGE) and 69–120 (KNRC…ITDQ). The interval 221–246 (YNNNNNNNNNNNNNNNNNNNNNNNNN) is disordered. Over residues 222–246 (NNNNNNNNNNNNNNNNNNNNNNNNN) the composition is skewed to low complexity. An RCC1 3 repeat occupies 298 to 348 (QNQVYGWGENLNGQLGIEGIDYSTEPILIELPLVEIKHISSGAYHSAFVTN). The segment covering 412-431 (IKDKNENNETKHTNKNKDNH) has biased composition (basic and acidic residues). Residues 412 to 458 (IKDKNENNETKHTNKNKDNHDDDDESDHSDDDHHDDDDNDKDSQGIN) form a disordered region. Acidic residues predominate over residues 432-451 (DDDDESDHSDDDHHDDDDND). Positions 668–698 (IEQTSTQVANSENENENEIEMKMKMKKNEMK) form a coiled coil.

The chain is RCC1 domain-containing protein DDB_G0295713 from Dictyostelium discoideum (Social amoeba).